Here is a 599-residue protein sequence, read N- to C-terminus: Spermatogenesis-associated protein 7 (599 aa).

The disordered stretch occupies residues Lys-163–Ser-205. Positions Lys-166–Asn-175 are enriched in polar residues.

In terms of assembly, found in a complex with CFAP410, NEK1 and SPATA7. Interacts with NEK1. Interacts with RPGRIP1. Interacts with RPGR. Interacts with NPHP4. Interacts with NPHP1. Interacts with AHI1.

The protein resides in the cytoplasm. It is found in the cytoskeleton. The protein localises to the cilium axoneme. It localises to the cilium basal body. Its subcellular location is the cell projection. The protein resides in the cilium. It is found in the photoreceptor outer segment. Involved in the maintenance of both rod and cone photoreceptor cells. It is required for recruitment and proper localization of RPGRIP1 to the photoreceptor connecting cilium (CC), as well as photoreceptor-specific localization of proximal CC proteins at the distal CC. Maintenance of protein localization at the photoreceptor-specific distal CC is essential for normal microtubule stability and to prevent photoreceptor degeneration. The sequence is that of Spermatogenesis-associated protein 7 (SPATA7) from Homo sapiens (Human).